The following is a 265-amino-acid chain: Undecaprenyl-diphosphatase (265 aa).

8 helical membrane-spanning segments follow: residues 1–21, 39–61, 85–105, 115–135, 149–169, 187–207, 218–238, and 244–264; these read MDFI…FLPI, QGLA…YFRL, LAWA…MLTE, LIIA…DWAG, ILFI…RSGI, FSFL…ALDL, ALAL…HYFF, and IGML…FYLF.

This sequence belongs to the UppP family.

Its subcellular location is the cell inner membrane. It catalyses the reaction di-trans,octa-cis-undecaprenyl diphosphate + H2O = di-trans,octa-cis-undecaprenyl phosphate + phosphate + H(+). Functionally, catalyzes the dephosphorylation of undecaprenyl diphosphate (UPP). Confers resistance to bacitracin. The chain is Undecaprenyl-diphosphatase from Nitrosococcus oceani (strain ATCC 19707 / BCRC 17464 / JCM 30415 / NCIMB 11848 / C-107).